The primary structure comprises 137 residues: Large ribosomal subunit protein uL16 (137 aa).

This sequence belongs to the universal ribosomal protein uL16 family. As to quaternary structure, part of the 50S ribosomal subunit.

Binds 23S rRNA and is also seen to make contacts with the A and possibly P site tRNAs. The protein is Large ribosomal subunit protein uL16 of Xanthomonas axonopodis pv. citri (strain 306).